The following is a 900-amino-acid chain: Probable dipeptidyl-aminopeptidase B (900 aa).

The disordered stretch occupies residues 1 to 83 (MARTDQGLGA…DILSHPRDKS (83 aa)). Topologically, residues 1–90 (MARTDQGLGA…DKSKRSRGSR (90 aa)) are cytoplasmic. Over residues 24-39 (NSFSSTDSLSTDGSLF) the composition is skewed to low complexity. Polar residues predominate over residues 44–55 (NATQFQKSTQLP). Residues 91–111 (WIWVIGLLCLGGWILAFILFW) form a helical; Signal-anchor for type II membrane protein membrane-spanning segment. Topologically, residues 112–900 (GRRNNNSDIS…HHVGSALAAT (789 aa)) are vacuolar. Residues N150, N195, N348, N410, N514, N639, and N644 are each glycosylated (N-linked (GlcNAc...) asparagine). Catalysis depends on S753, which acts as the Charge relay system. The N-linked (GlcNAc...) asparagine glycan is linked to N812. Residues D830 and H863 each act as charge relay system in the active site.

It belongs to the peptidase S9B family.

It localises to the vacuole membrane. It carries out the reaction Release of an N-terminal dipeptide, Xaa-Yaa-|-Zaa-, from a polypeptide, preferentially when Yaa is Pro, provided Zaa is neither Pro nor hydroxyproline.. Functionally, type IV dipeptidyl-peptidase which removes N-terminal dipeptides sequentially from polypeptides having unsubstituted N-termini provided that the penultimate residue is proline. This Talaromyces stipitatus (strain ATCC 10500 / CBS 375.48 / QM 6759 / NRRL 1006) (Penicillium stipitatum) protein is Probable dipeptidyl-aminopeptidase B (dapB).